Consider the following 698-residue polypeptide: Na(+)/H(+) antiporter NhaS5 (698 aa).

Transmembrane regions (helical) follow at residues 10-30 (SNPLIDFTILLLVTLILPPIF), 35-55 (LPGLVGLLFAGIVLGKSGLGV), 65-85 (LFTDIGKIYLMFVAGLEIDMV), 100-120 (LTFAVPLLTGLAVGLTFGYSF), 121-141 (NASVLLGSLFASHTLLGYPIV), 156-176 (IGATIFTDIAALLVLAICISI), 184-204 (AGLVVQLVAIAVYSALVLIGF), 222-242 (QFLFVLLAVFLASVGSELINV), 275-295 (LFIPFFFIGIGLLLDLPAFLV), 300-320 (LFPLVVAIVVGLILSKGVAAI), 333-353 (GLTMWSLSIPQVAATLAAAVA), and 370-390 (VLNTIIVLMLITSIVGPLMTA).

Belongs to the monovalent cation:proton antiporter 2 (CPA2) transporter (TC 2.A.37) family.

It is found in the membrane. Its function is as follows. Na(+)/H(+) antiporter. The chain is Na(+)/H(+) antiporter NhaS5 (nhaS5) from Synechocystis sp. (strain ATCC 27184 / PCC 6803 / Kazusa).